Here is a 176-residue protein sequence, read N- to C-terminus: Photosystem I assembly protein Ycf4 (176 aa).

The next 2 helical transmembrane spans lie at 22–42 and 48–68; these read FVWA…GTAS and LIAF…GLFI.

The protein belongs to the Ycf4 family.

The protein localises to the plastid thylakoid membrane. In terms of biological role, seems to be required for the assembly of the photosystem I complex. The protein is Photosystem I assembly protein Ycf4 of Cuscuta gronovii (Common dodder).